Reading from the N-terminus, the 436-residue chain is C4-dicarboxylate transport protein 2 (436 aa).

9 consecutive transmembrane segments (helical) span residues 14–34 (VLVA…TAVA), 45–65 (LIKM…IAGM), 77–97 (MALL…LVVV), 142–162 (VVGA…VLFG), 198–218 (PIGA…GSLV), 223–243 (LMLC…GGIA), 290–310 (VVGL…SIYL), 331–351 (ITLL…TGSG), and 353–373 (IVLA…LALI). A disordered region spans residues 414–436 (ELAGEGNASSPASDIPVGGREAV).

This sequence belongs to the dicarboxylate/amino acid:cation symporter (DAACS) (TC 2.A.23) family.

The protein localises to the cell inner membrane. Functionally, responsible for the transport of dicarboxylates such as succinate, fumarate, and malate from the periplasm across the membrane. The sequence is that of C4-dicarboxylate transport protein 2 from Pseudomonas paraeruginosa (strain DSM 24068 / PA7) (Pseudomonas aeruginosa (strain PA7)).